We begin with the raw amino-acid sequence, 392 residues long: Heat-inducible transcription repressor HrcA (392 aa).

This sequence belongs to the HrcA family.

Its function is as follows. Negative regulator of class I heat shock genes (grpE-dnaK-dnaJ and groELS operons). Prevents heat-shock induction of these operons. The sequence is that of Heat-inducible transcription repressor HrcA from Chlamydia trachomatis serovar D (strain ATCC VR-885 / DSM 19411 / UW-3/Cx).